The sequence spans 152 residues: Small ribosomal subunit protein uS15 (152 aa).

The segment at 1–20 is disordered; it reads MNKRRANGSSHSTRPVRTGS.

Belongs to the universal ribosomal protein uS15 family. In terms of assembly, part of the 30S ribosomal subunit.

The chain is Small ribosomal subunit protein uS15 from Metallosphaera sedula (strain ATCC 51363 / DSM 5348 / JCM 9185 / NBRC 15509 / TH2).